Reading from the N-terminus, the 166-residue chain is Urocortin-3 (166 aa).

Positions 1–23 (MLVPAPFLLVLLLLLGAPQVGLS) are cleaved as a signal peptide. The propeptide occupies 24 to 123 (QRSPKAGSSP…QDKAKSDRRT (100 aa)). A compositionally biased stretch (basic and acidic residues) spans 41–51 (REAEKSQRKDT). The interval 41-123 (REAEKSQRKD…QDKAKSDRRT (83 aa)) is disordered. The segment covering 68-77 (EDQEGQEEED) has biased composition (acidic residues). Residues 86 to 96 (SVGGGGGGGAG) show a composition bias toward gly residues. Residues 113-123 (SQDKAKSDRRT) are compositionally biased toward basic and acidic residues. Isoleucine amide is present on I162.

It belongs to the sauvagine/corticotropin-releasing factor/urotensin I family. In terms of assembly, binds with high affinity to CRF receptors 2-alpha and 2-beta.

Its subcellular location is the secreted. Suppresses food intake, delays gastric emptying and decreases heat-induced edema. Might represent an endogenous ligand for maintaining homeostasis after stress. This is Urocortin-3 (UCN3) from Bos taurus (Bovine).